Consider the following 243-residue polypeptide: MAPRPLGPLVLALGGAAAVLGSVLFILWKAYFGRGRERRWDRGEAWWGADTARLPQWDEWEPEDEEDEPALEELEQREVLVLGLDGSGKSTFLRMLAGKPPVEGHVPTWGFNSVRLPTKNFEVDLLEIGGSQNLRFYWKEFVNEVDVLVFMVDSTDRLRLPWARQELQKLLDRDPDLPVVIVANKQDLSGAMNMVELQQELGLLASYNQREVFLLAASIAPAGSGFGEPGTVHIWKLLLQLLS.

Residues 83–90 (GLDGSGKS), 127–131 (EIGGS), and 184–187 (NKQD) each bind GTP.

Belongs to the small GTPase superfamily. Arf family.

The protein is ADP-ribosylation factor-like protein 10 (Arl10) of Mus musculus (Mouse).